The sequence spans 164 residues: Transcription elongation factor GreA (164 aa).

The protein belongs to the GreA/GreB family.

Necessary for efficient RNA polymerase transcription elongation past template-encoded arresting sites. The arresting sites in DNA have the property of trapping a certain fraction of elongating RNA polymerases that pass through, resulting in locked ternary complexes. Cleavage of the nascent transcript by cleavage factors such as GreA or GreB allows the resumption of elongation from the new 3'terminus. GreA releases sequences of 2 to 3 nucleotides. The sequence is that of Transcription elongation factor GreA from Helicobacter pylori (strain J99 / ATCC 700824) (Campylobacter pylori J99).